The chain runs to 464 residues: Integrator complex subunit 12 (464 aa).

Residues 42–98 (GNDSVYRPQPKEVEQPKAMLSKVKPETKASSSTPSSSILSKPLASEKVKKEAEKRTA) are disordered. A compositionally biased stretch (low complexity) spans 69–84 (KASSSTPSSSILSKPL). The segment covering 85-98 (ASEKVKKEAEKRTA) has biased composition (basic and acidic residues). Residues 156–212 (GLACVVCRQMTVFSGNQLVECQECHNLYHQDCHRPQVTDKDVNDPRLVWYCARCTRQ) form a PHD-type zinc finger. 2 disordered regions span residues 216–252 (MAQKNQKPSQKPAPSAVSAVTPVAKDPSVNKPELKSK) and 312–445 (TNSQ…SQLN). Over residues 227–239 (PAPSAVSAVTPVA) the composition is skewed to low complexity. Over residues 312 to 329 (TNSQATSGKPPSLSSVQK) the composition is skewed to polar residues. Over residues 339–371 (SKAGSVSKSGSGGSSSTIPLKPLPPLILGKTGL) the composition is skewed to low complexity. Polar residues predominate over residues 372–382 (SRSMSSDNVSK). Low complexity predominate over residues 384–421 (GLPSPNPSSSGSVSSLSSQLGSNNGSSNTAGSNVNSSN). Residues 428 to 445 (SMQQSGAKGPTSQESQLN) show a composition bias toward polar residues.

This sequence belongs to the Integrator subunit 12 family. In terms of assembly, component of the Integrator complex, composed of core subunits INTS1, INTS2, INTS3, INTS4, INTS5, INTS6, INTS7, INTS8, INTS9/RC74, INTS10, INTS11/CPSF3L, INTS12, INTS13, INTS14 and INTS15. The core complex associates with protein phosphatase 2A subunits PPP2CA and PPP2R1A, to form the Integrator-PP2A (INTAC) complex.

The protein localises to the nucleus. In terms of biological role, component of the integrator complex, a multiprotein complex that terminates RNA polymerase II (Pol II) transcription in the promoter-proximal region of genes. The integrator complex provides a quality checkpoint during transcription elongation by driving premature transcription termination of transcripts that are unfavorably configured for transcriptional elongation: the complex terminates transcription by (1) catalyzing dephosphorylation of the C-terminal domain (CTD) of Pol II subunit POLR2A/RPB1 and SUPT5H/SPT5, (2) degrading the exiting nascent RNA transcript via endonuclease activity and (3) promoting the release of Pol II from bound DNA. The integrator complex is also involved in terminating the synthesis of non-coding Pol II transcripts, such as enhancer RNAs (eRNAs), small nuclear RNAs (snRNAs), telomerase RNAs and long non-coding RNAs (lncRNAs). The polypeptide is Integrator complex subunit 12 (ints12) (Xenopus laevis (African clawed frog)).